A 521-amino-acid polypeptide reads, in one-letter code: Circadian clock oscillator protein KaiC (521 aa).

KaiC domains lie at 1 to 248 (MNEP…INIF) and 262 to 521 (ARIS…LDEE). ATP contacts are provided by Gly50, Thr51, Gly52, Lys53, Thr54, Leu55, Ser90, Lys225, Leu226, Arg227, Thr229, His231, Thr241, Thr291, Gly292, Thr293, Gly294, Lys295, Thr296, and Leu297. A Mg(2+)-binding site is contributed by Thr54. Mg(2+) is bound at residue Thr296. Glu319 is a Mg(2+) binding site. Residue Trp332 coordinates ATP. Residue Ser432 is modified to Phosphoserine; by autocatalysis. Position 433 is a phosphothreonine; by autocatalysis (Thr433). Arg452, Lys458, Met459, Arg460, Ser462, His464, and Lys466 together coordinate ATP.

It belongs to the KaiC family. As to quaternary structure, homohexamer; hexamerization is dependent on ATP-binding. The KaiABC complex composition changes during the circadian cycle to control KaiC phosphorylation. Complexes KaiC(6), KaiA(2-4):KaiC(6), KaiB(6):KaiC(6) and KaiC(6):KaiB(6):KaiA(12) are among the most important forms, many form cooperatively. KaiC interacts with SasA, activating its autokinase function and leading to RpaA activation. Requires Mg(2+) as cofactor. Phosphorylated on serine and threonine residues by autocatalysis. Has a 4 step phosphorylation cycle; the autokinase acts first on Thr-433, then Ser-432. When Ser-432 is modified KaiC switches to an autophosphatase mode, acting first on phospho-Thr-433 then phospho-Ser-432.

The catalysed reaction is L-seryl-[protein] + ATP = O-phospho-L-seryl-[protein] + ADP + H(+). It catalyses the reaction L-threonyl-[protein] + ATP = O-phospho-L-threonyl-[protein] + ADP + H(+). It carries out the reaction ATP + H2O = ADP + phosphate + H(+). The interaction with KaiA enhances its phosphorylation status, while the interaction with KaiB decreases it. Its function is as follows. Central component of the KaiABC oscillator complex, which constitutes the main circadian regulator in cyanobacteria. Complex composition changes during the circadian cycle to control KaiC phosphorylation. KaiA stimulates KaiC autophosphorylation, while KaiB sequesters KaiA, leading to KaiC autodephosphorylation. Clock output pathways impact the RpaA transcriptional regulator. KaiC enhances the autophosphorylation activity of SasA, which then transfers its phosphate group to RpaA to activate it. KaiB and KaiC together enhance the phospho-RpaA dephosphatase activity of CikA. In terms of biological role, has a weak, temperature-independent ATPase activity; ATPase activity defines the circadian period. The phosphorylation state of KaiC modulates its ATPase activity and effects KaiB binding. In Rippkaea orientalis (strain PCC 8801 / RF-1) (Cyanothece sp. (strain PCC 8801)), this protein is Circadian clock oscillator protein KaiC.